We begin with the raw amino-acid sequence, 594 residues long: DEAD-box ATP-dependent RNA helicase 25 (594 aa).

Disordered regions lie at residues 56–80 (RSGG…EEGL) and 92–121 (GVRE…VDGS). The short motif at 126-154 (TRFDQCTISPLSLKAVKDAGYERMTQVQE) is the Q motif element. In terms of domain architecture, Helicase ATP-binding spans 157–340 (LPVILQGKDV…HIAMKKNYKF (184 aa)). 170-177 (AKTGTGKT) is an ATP binding site. Residues 288 to 291 (DEAD) carry the DEAD box motif. The Helicase C-terminal domain maps to 370–520 (ILYDVLKKHV…SVDSSTQTIV (151 aa)).

Belongs to the DEAD box helicase family.

It catalyses the reaction ATP + H2O = ADP + phosphate + H(+). This chain is DEAD-box ATP-dependent RNA helicase 25, found in Oryza sativa subsp. japonica (Rice).